We begin with the raw amino-acid sequence, 448 residues long: Tubulin beta-2 chain (448 aa).

The GTP site is built by Gln-11, Glu-69, Ser-138, Gly-142, Thr-143, Gly-144, Asn-204, and Asn-226. Glu-69 is a binding site for Mg(2+). The disordered stretch occupies residues 429–448 (TADEDGYEYEDEEEVGEEDA).

It belongs to the tubulin family. Dimer of alpha and beta chains. A typical microtubule is a hollow water-filled tube with an outer diameter of 25 nm and an inner diameter of 15 nM. Alpha-beta heterodimers associate head-to-tail to form protofilaments running lengthwise along the microtubule wall with the beta-tubulin subunit facing the microtubule plus end conferring a structural polarity. Microtubules usually have 13 protofilaments but different protofilament numbers can be found in some organisms and specialized cells. It depends on Mg(2+) as a cofactor.

It is found in the cytoplasm. It localises to the cytoskeleton. Its function is as follows. Tubulin is the major constituent of microtubules, a cylinder consisting of laterally associated linear protofilaments composed of alpha- and beta-tubulin heterodimers. Microtubules grow by the addition of GTP-tubulin dimers to the microtubule end, where a stabilizing cap forms. Below the cap, tubulin dimers are in GDP-bound state, owing to GTPase activity of alpha-tubulin. The polypeptide is Tubulin beta-2 chain (TUBB2) (Lupinus albus (White lupine)).